We begin with the raw amino-acid sequence, 326 residues long: Beta-ketoacyl-[acyl-carrier-protein] synthase III (326 aa).

Active-site residues include cysteine 112 and histidine 251. An ACP-binding region spans residues 252 to 256; sequence QANSR. Residue asparagine 281 is part of the active site.

It belongs to the thiolase-like superfamily. FabH family. In terms of assembly, homodimer.

It is found in the cytoplasm. The catalysed reaction is malonyl-[ACP] + acetyl-CoA + H(+) = 3-oxobutanoyl-[ACP] + CO2 + CoA. It functions in the pathway lipid metabolism; fatty acid biosynthesis. Functionally, catalyzes the condensation reaction of fatty acid synthesis by the addition to an acyl acceptor of two carbons from malonyl-ACP. Catalyzes the first condensation reaction which initiates fatty acid synthesis and may therefore play a role in governing the total rate of fatty acid production. Possesses both acetoacetyl-ACP synthase and acetyl transacylase activities. Its substrate specificity determines the biosynthesis of branched-chain and/or straight-chain of fatty acids. This is Beta-ketoacyl-[acyl-carrier-protein] synthase III from Clostridium botulinum (strain Loch Maree / Type A3).